The primary structure comprises 381 residues: Alkanesulfonate monooxygenase (381 aa).

This sequence belongs to the SsuD family. As to quaternary structure, homotetramer.

The enzyme catalyses an alkanesulfonate + FMNH2 + O2 = an aldehyde + FMN + sulfite + H2O + 2 H(+). Catalyzes the desulfonation of aliphatic sulfonates. The protein is Alkanesulfonate monooxygenase of Enterobacter sp. (strain 638).